Consider the following 172-residue polypeptide: MAKMQSKMQSDKPDDGMREKMIAVNRVTKVVKGGRIMGFAALAVVGDGDGRIGMGKGKSKEVPVAVQKAMEEARRKMIKVTLKNGTLQHTVTGKHGASSVLMLPAKDGTGVIAGGPMRAIFEVMGVTNVVAKSTGSTNPYNMVRATLDGLAKMNTASEIAAKRGKSVEEILG.

The 64-residue stretch at 17–80 (MREKMIAVNR…EEARRKMIKV (64 aa)) folds into the S5 DRBM domain.

Belongs to the universal ribosomal protein uS5 family. In terms of assembly, part of the 30S ribosomal subunit. Contacts proteins S4 and S8.

In terms of biological role, with S4 and S12 plays an important role in translational accuracy. Its function is as follows. Located at the back of the 30S subunit body where it stabilizes the conformation of the head with respect to the body. This Janthinobacterium sp. (strain Marseille) (Minibacterium massiliensis) protein is Small ribosomal subunit protein uS5.